Here is a 192-residue protein sequence, read N- to C-terminus: Transposon Tn552 DNA-invertase BinR (192 aa).

In terms of domain architecture, Resolvase/invertase-type recombinase catalytic spans 1–136 (MKIGYARVST…AGRIAARARG (136 aa)). Serine 9 (O-(5'-phospho-DNA)-serine intermediate) is an active-site residue. The H-T-H motif DNA-binding region spans 163–182 (IKTIAEQWKVSRTTIYRYLN).

Belongs to the site-specific recombinase resolvase family.

DNA-invertase, mediating the inversion of inv. The sequence is that of Transposon Tn552 DNA-invertase BinR (resR) from Staphylococcus aureus.